A 1199-amino-acid chain; its full sequence is Chromosome partition protein Smc (1199 aa).

32–39 (PNGSGKSN) contributes to the ATP binding site. Positions 192–528 (GVAEFDEKSE…NARIKTLKDM (337 aa)) form a coiled coil. An SMC hinge domain is found at 546–658 (PGVVDIAGNL…VDNLENAKKL (113 aa)). Positions 691 to 1051 (IKVDIDMKKL…YLQLISEVQK (361 aa)) form a coiled coil.

It belongs to the SMC family. In terms of assembly, homodimer.

Its subcellular location is the cytoplasm. Functionally, required for chromosome condensation and partitioning. The chain is Chromosome partition protein Smc from Methanococcus voltae.